Here is a 209-residue protein sequence, read N- to C-terminus: Large ribosomal subunit protein uL3 (209 aa).

The segment at 128–156 (FAGGSRTHGQSDRLRAPGSVGGSSDPSRT) is disordered.

This sequence belongs to the universal ribosomal protein uL3 family. As to quaternary structure, part of the 50S ribosomal subunit. Forms a cluster with proteins L14 and L19.

In terms of biological role, one of the primary rRNA binding proteins, it binds directly near the 3'-end of the 23S rRNA, where it nucleates assembly of the 50S subunit. In Prosthecochloris aestuarii (strain DSM 271 / SK 413), this protein is Large ribosomal subunit protein uL3.